A 330-amino-acid polypeptide reads, in one-letter code: uncharacterized protein (330 aa).

Disordered stretches follow at residues 136–160 (VPPSVNEPKPKTSQTTKPPSNDESS) and 172–314 (DNEK…SQFN). The span at 223–235 (PKPPAPPPPPPVP) shows a compositional bias: pro residues. A compositionally biased stretch (low complexity) spans 236 to 246 (ISMTPAAISVT). 3 stretches are compositionally biased toward polar residues: residues 263 to 276 (AQSTLPSVSSTTDE), 284 to 294 (TRSSSQSNSTV), and 304 to 314 (PASSPTFSQFN).

This is an uncharacterized protein from Danio rerio (Zebrafish).